We begin with the raw amino-acid sequence, 607 residues long: Aspartate--tRNA(Asp/Asn) ligase (607 aa).

Residue Glu168 coordinates L-aspartate. The aspartate stretch occupies residues 192–195 (QLFK). Arg214 lines the L-aspartate pocket. ATP-binding positions include 214–216 (RDE) and Gln223. His449 is an L-aspartate binding site. Position 483 (Glu483) interacts with ATP. Residue Arg490 participates in L-aspartate binding. Position 535 to 538 (535 to 538 (GWDR)) interacts with ATP. The tract at residues 578–607 (LEAGVDARPKPEARAQAGTAGPAAPVADPT) is disordered. Basic and acidic residues predominate over residues 580–590 (AGVDARPKPEA). The segment covering 591–607 (RAQAGTAGPAAPVADPT) has biased composition (low complexity).

It belongs to the class-II aminoacyl-tRNA synthetase family. Type 1 subfamily. Homodimer.

The protein resides in the cytoplasm. The catalysed reaction is tRNA(Asx) + L-aspartate + ATP = L-aspartyl-tRNA(Asx) + AMP + diphosphate. Aspartyl-tRNA synthetase with relaxed tRNA specificity since it is able to aspartylate not only its cognate tRNA(Asp) but also tRNA(Asn). Reaction proceeds in two steps: L-aspartate is first activated by ATP to form Asp-AMP and then transferred to the acceptor end of tRNA(Asp/Asn). The sequence is that of Aspartate--tRNA(Asp/Asn) ligase from Salinispora tropica (strain ATCC BAA-916 / DSM 44818 / JCM 13857 / NBRC 105044 / CNB-440).